The following is a 329-amino-acid chain: DNA-directed RNA polymerase subunit alpha (329 aa).

Positions 1 to 235 (MLGSVTDFLK…EQLDAFVDLR (235 aa)) are alpha N-terminal domain (alpha-NTD). An alpha C-terminal domain (alpha-CTD) region spans residues 249-329 (FDPILLRPVD…NWPPASLADN (81 aa)).

Belongs to the RNA polymerase alpha chain family. As to quaternary structure, homodimer. The RNAP catalytic core consists of 2 alpha, 1 beta, 1 beta' and 1 omega subunit. When a sigma factor is associated with the core the holoenzyme is formed, which can initiate transcription.

It carries out the reaction RNA(n) + a ribonucleoside 5'-triphosphate = RNA(n+1) + diphosphate. In terms of biological role, DNA-dependent RNA polymerase catalyzes the transcription of DNA into RNA using the four ribonucleoside triphosphates as substrates. The polypeptide is DNA-directed RNA polymerase subunit alpha (Tolumonas auensis (strain DSM 9187 / NBRC 110442 / TA 4)).